A 312-amino-acid chain; its full sequence is MSTILLPKTQHLVVFQEVIRSGSIGSAAKELGLTQPAVSKIINDIEDYFGVELVVRKNTGVTLTPAGQLLLSRSESITREMKNMVNEISGMSSEAVVEVSFGFPSLIGFTFMSGMINKFKEVFPKAQVSMYEAQLSSFLPAIRDGRLDFAIGTLSAEMKLQDLHVEPLFESEFVLVASKSRTCTGTTTLESLKNEQWVLPQTNMGYYSELLTTLQRNGISIENIVKTDSVVTIYNLVLNADFLTVIPCDMTSPFGSNQFITIPVEETLPVAQYAAVWSKNYRIKKAASVLVELAKEYSSYNGCRRRQLIEVG.

Positions Pro7–Thr64 constitute an HTH lysR-type domain. Residues Ile24–Asn43 constitute a DNA-binding region (H-T-H motif).

It belongs to the LysR transcriptional regulatory family.

It participates in amino-acid degradation; L-threonine degradation via propanoate pathway [regulation]. Transcriptional activator for the tdcABCDE operon. The chain is HTH-type transcriptional regulator TdcA (tdcA) from Escherichia coli O157:H7.